A 411-amino-acid chain; its full sequence is Copper resistance protein CRF1 (411 aa).

Positions 1 to 40 (MVVIEGIKYACERCIRGHRVSSCTHTQQPLIRIKPKGRPA) form a DNA-binding region, copper-fist. Residues cysteine 11, cysteine 14, cysteine 23, and histidine 25 each coordinate Zn(2+). 4 stretches are compositionally biased toward low complexity: residues 115 to 190 (QQQA…PHSP), 205 to 214 (SSSSLSSLHS), 227 to 241 (SHNS…ANSP), and 350 to 370 (SVAA…PPSS). 2 disordered regions span residues 115–241 (QQQA…ANSP) and 348–389 (EMSV…VSPA).

It localises to the nucleus. Transcriptional regulator involved in resistance to high copper concentration. This chain is Copper resistance protein CRF1 (CRF1), found in Yarrowia lipolytica (strain CLIB 122 / E 150) (Yeast).